The sequence spans 103 residues: Large ribosomal subunit protein bL21 (103 aa).

It belongs to the bacterial ribosomal protein bL21 family. In terms of assembly, part of the 50S ribosomal subunit. Contacts protein L20.

This protein binds to 23S rRNA in the presence of protein L20. This is Large ribosomal subunit protein bL21 from Cupriavidus metallidurans (strain ATCC 43123 / DSM 2839 / NBRC 102507 / CH34) (Ralstonia metallidurans).